The chain runs to 420 residues: Serine hydroxymethyltransferase (420 aa).

(6S)-5,6,7,8-tetrahydrofolate-binding positions include Leu-121 and 125–127 (GHL). Lys-229 is modified (N6-(pyridoxal phosphate)lysine).

This sequence belongs to the SHMT family. In terms of assembly, homodimer. The cofactor is pyridoxal 5'-phosphate.

It localises to the cytoplasm. The enzyme catalyses (6R)-5,10-methylene-5,6,7,8-tetrahydrofolate + glycine + H2O = (6S)-5,6,7,8-tetrahydrofolate + L-serine. The protein operates within one-carbon metabolism; tetrahydrofolate interconversion. Its pathway is amino-acid biosynthesis; glycine biosynthesis; glycine from L-serine: step 1/1. Functionally, catalyzes the reversible interconversion of serine and glycine with tetrahydrofolate (THF) serving as the one-carbon carrier. This reaction serves as the major source of one-carbon groups required for the biosynthesis of purines, thymidylate, methionine, and other important biomolecules. Also exhibits THF-independent aldolase activity toward beta-hydroxyamino acids, producing glycine and aldehydes, via a retro-aldol mechanism. This Aggregatibacter actinomycetemcomitans (Actinobacillus actinomycetemcomitans) protein is Serine hydroxymethyltransferase.